The primary structure comprises 169 residues: Crossover junction endodeoxyribonuclease RuvC (169 aa).

Active-site residues include D11, E71, and D143. Mg(2+) contacts are provided by D11, E71, and D143.

The protein belongs to the RuvC family. In terms of assembly, homodimer which binds Holliday junction (HJ) DNA. The HJ becomes 2-fold symmetrical on binding to RuvC with unstacked arms; it has a different conformation from HJ DNA in complex with RuvA. In the full resolvosome a probable DNA-RuvA(4)-RuvB(12)-RuvC(2) complex forms which resolves the HJ. Requires Mg(2+) as cofactor.

It localises to the cytoplasm. It carries out the reaction Endonucleolytic cleavage at a junction such as a reciprocal single-stranded crossover between two homologous DNA duplexes (Holliday junction).. Its function is as follows. The RuvA-RuvB-RuvC complex processes Holliday junction (HJ) DNA during genetic recombination and DNA repair. Endonuclease that resolves HJ intermediates. Cleaves cruciform DNA by making single-stranded nicks across the HJ at symmetrical positions within the homologous arms, yielding a 5'-phosphate and a 3'-hydroxyl group; requires a central core of homology in the junction. The consensus cleavage sequence is 5'-(A/T)TT(C/G)-3'. Cleavage occurs on the 3'-side of the TT dinucleotide at the point of strand exchange. HJ branch migration catalyzed by RuvA-RuvB allows RuvC to scan DNA until it finds its consensus sequence, where it cleaves and resolves the cruciform DNA. The polypeptide is Crossover junction endodeoxyribonuclease RuvC (Rhizobium etli (strain ATCC 51251 / DSM 11541 / JCM 21823 / NBRC 15573 / CFN 42)).